A 351-amino-acid chain; its full sequence is Protein TBATA (351 aa).

Disordered regions lie at residues 16–40 (KAELKLEKKSGRKPRSPRDSGPQKE), 167–186 (KKEKEQKEEPLREQGAKYSA), 195–216 (STRAVGRRRSHQGQQSQSSSRH), and 292–351 (EVHE…RAES). The span at 167–181 (KKEKEQKEEPLREQG) shows a compositional bias: basic and acidic residues. Basic and acidic residues-rich tracts occupy residues 292–302 (EVHEPPQEKQE) and 340–351 (TEKKTSKPRAES).

It belongs to the TBATA family.

It localises to the cytoplasm. It is found in the cytosol. In terms of biological role, may play a role in spermatid differentiation. Modulates thymic stromal cell proliferation and thymus function. This is Protein TBATA (TBATA) from Homo sapiens (Human).